A 298-amino-acid chain; its full sequence is Glutamyl-Q tRNA(Asp) synthetase (298 aa).

L-glutamate is bound by residues 8–12 (RFAPS) and glutamate 44. Residues 11–21 (PSPTGPLHFGS) carry the 'HIGH' region motif. The Zn(2+) site is built by cysteine 100, cysteine 102, tyrosine 123, and cysteine 127. Residues tyrosine 183 and arginine 201 each contribute to the L-glutamate site. A 'KMSKS' region motif is present at residues 239 to 243 (KLSKQ). Lysine 242 provides a ligand contact to ATP.

Belongs to the class-I aminoacyl-tRNA synthetase family. GluQ subfamily. Requires Zn(2+) as cofactor.

Catalyzes the tRNA-independent activation of glutamate in presence of ATP and the subsequent transfer of glutamate onto a tRNA(Asp). Glutamate is transferred on the 2-amino-5-(4,5-dihydroxy-2-cyclopenten-1-yl) moiety of the queuosine in the wobble position of the QUC anticodon. In Burkholderia orbicola (strain MC0-3), this protein is Glutamyl-Q tRNA(Asp) synthetase.